Reading from the N-terminus, the 124-residue chain is Ribonuclease pancreatic (124 aa).

Residues Lys-1 to Met-13 are compositionally biased toward basic and acidic residues. Positions Lys-1–Asn-21 are disordered. Substrate is bound by residues Lys-7 and Arg-10. His-12 serves as the catalytic Proton acceptor. Disulfide bonds link Cys-26–Cys-84, Cys-40–Cys-95, Cys-58–Cys-110, and Cys-65–Cys-72. Asn-34 carries an N-linked (GlcNAc...) asparagine glycan. Residues Lys-41 to Thr-45, Lys-66, and Arg-85 contribute to the substrate site. Catalysis depends on His-119, which acts as the Proton donor.

The protein belongs to the pancreatic ribonuclease family. Monomer. Interacts with and forms tight 1:1 complexes with RNH1. Dimerization of two such complexes may occur. Interaction with RNH1 inhibits this protein. As to expression, pancreas.

It is found in the secreted. It carries out the reaction an [RNA] containing cytidine + H2O = an [RNA]-3'-cytidine-3'-phosphate + a 5'-hydroxy-ribonucleotide-3'-[RNA].. The catalysed reaction is an [RNA] containing uridine + H2O = an [RNA]-3'-uridine-3'-phosphate + a 5'-hydroxy-ribonucleotide-3'-[RNA].. Endonuclease that catalyzes the cleavage of RNA on the 3' side of pyrimidine nucleotides. Acts on single-stranded and double-stranded RNA. This chain is Ribonuclease pancreatic (RNASE1), found in Hippopotamus amphibius (Hippopotamus).